Consider the following 274-residue polypeptide: Large ribosomal subunit protein uL2 (274 aa).

Residues 224–274 (VAMNPVDHPHGGGEGRTSGGRHPVTPWGIPTKGYKTRRNKRSNKLIVQKRK) are disordered. Over residues 257 to 274 (YKTRRNKRSNKLIVQKRK) the composition is skewed to basic residues.

It belongs to the universal ribosomal protein uL2 family. In terms of assembly, part of the 50S ribosomal subunit. Forms a bridge to the 30S subunit in the 70S ribosome.

Functionally, one of the primary rRNA binding proteins. Required for association of the 30S and 50S subunits to form the 70S ribosome, for tRNA binding and peptide bond formation. It has been suggested to have peptidyltransferase activity; this is somewhat controversial. Makes several contacts with the 16S rRNA in the 70S ribosome. The polypeptide is Large ribosomal subunit protein uL2 (Francisella tularensis subsp. holarctica (strain FTNF002-00 / FTA)).